We begin with the raw amino-acid sequence, 224 residues long: Deoxyribose-phosphate aldolase (224 aa).

Aspartate 92 (proton donor/acceptor) is an active-site residue. Lysine 154 (schiff-base intermediate with acetaldehyde) is an active-site residue. Lysine 183 serves as the catalytic Proton donor/acceptor.

It belongs to the DeoC/FbaB aldolase family. DeoC type 1 subfamily.

The protein localises to the cytoplasm. It catalyses the reaction 2-deoxy-D-ribose 5-phosphate = D-glyceraldehyde 3-phosphate + acetaldehyde. The protein operates within carbohydrate degradation; 2-deoxy-D-ribose 1-phosphate degradation; D-glyceraldehyde 3-phosphate and acetaldehyde from 2-deoxy-alpha-D-ribose 1-phosphate: step 2/2. Its function is as follows. Catalyzes a reversible aldol reaction between acetaldehyde and D-glyceraldehyde 3-phosphate to generate 2-deoxy-D-ribose 5-phosphate. The chain is Deoxyribose-phosphate aldolase from Histophilus somni (strain 129Pt) (Haemophilus somnus).